A 72-amino-acid chain; its full sequence is MAKSFYRYLLRFRHGHQEDPVVRFANGAYEDHSFPKGSTDYEELSGYLELNGDYLESMVVFDELWEQFLHEA.

This sequence belongs to the UPF0346 family.

The polypeptide is UPF0346 protein GK1571 (Geobacillus kaustophilus (strain HTA426)).